Consider the following 258-residue polypeptide: MAKKFDKDSFSGTLIVVLAVSLICSVIVAGAVVGLKPIQEKQKLQDKQGYILSVAGLMDKDTDIGKTFAERIEQRVVDLATGEYVADAPKDFSARIAGKDPAQSIRIKTEDDLAGIKSRAKYTEVYLVKGEDGKIGQIILPMHGNGLWSVMYGFVAIQPDGNTINGITYYEQGETPGLGGEIGNPLWQQKFVGKKLFDGQGKLALHVGKGAGSDKEHGVDALSGASLTSKGVQGSFAYWFGENGYIPYLNKLKSAGAQ.

The helical transmembrane segment at 14–34 (LIVVLAVSLICSVIVAGAVVG) threads the bilayer. FMN phosphoryl serine is present on S226.

This sequence belongs to the NqrC family. Composed of six subunits; NqrA, NqrB, NqrC, NqrD, NqrE and NqrF. Requires FMN as cofactor.

The protein resides in the cell inner membrane. The catalysed reaction is a ubiquinone + n Na(+)(in) + NADH + H(+) = a ubiquinol + n Na(+)(out) + NAD(+). In terms of biological role, NQR complex catalyzes the reduction of ubiquinone-1 to ubiquinol by two successive reactions, coupled with the transport of Na(+) ions from the cytoplasm to the periplasm. NqrA to NqrE are probably involved in the second step, the conversion of ubisemiquinone to ubiquinol. The sequence is that of Na(+)-translocating NADH-quinone reductase subunit C from Neisseria meningitidis serogroup B (strain ATCC BAA-335 / MC58).